Consider the following 358-residue polypeptide: Alanine racemase (358 aa).

Lysine 35 serves as the catalytic Proton acceptor; specific for D-alanine. An N6-(pyridoxal phosphate)lysine modification is found at lysine 35. Arginine 130 contributes to the substrate binding site. Tyrosine 255 acts as the Proton acceptor; specific for L-alanine in catalysis. Residue methionine 303 participates in substrate binding.

It belongs to the alanine racemase family. It depends on pyridoxal 5'-phosphate as a cofactor.

The enzyme catalyses L-alanine = D-alanine. The protein operates within amino-acid biosynthesis; D-alanine biosynthesis; D-alanine from L-alanine: step 1/1. Functionally, catalyzes the interconversion of L-alanine and D-alanine. May also act on other amino acids. The protein is Alanine racemase (alr) of Shewanella sp. (strain MR-7).